The primary structure comprises 599 residues: Sulfite reductase [NADPH] flavoprotein alpha-component (599 aa).

Residues 63 to 201 (ITVISASQTG…LATAWRKQVV (139 aa)) form the Flavodoxin-like domain. FMN contacts are provided by residues 69–74 (SQTGNA), 116–119 (STQG), and 152–161 (LGDTSYENFC). The FAD-binding FR-type domain maps to 234-448 (EQPLTAQLAV…IEHNDNFRLP (215 aa)). FAD is bound by residues Thr-322, His-356, 386 to 389 (RLYS), 404 to 406 (TVG), Tyr-410, and 419 to 422 (GGAS). NADP(+) contacts are provided by residues 519-520 (SR), 525-529 (KVYVQ), and Asp-561. FAD is bound at residue Tyr-599.

Belongs to the NADPH-dependent sulphite reductase flavoprotein subunit CysJ family. It in the N-terminal section; belongs to the flavodoxin family. The protein in the C-terminal section; belongs to the flavoprotein pyridine nucleotide cytochrome reductase family. In terms of assembly, alpha(8)-beta(8). The alpha component is a flavoprotein, the beta component is a hemoprotein. FAD serves as cofactor. The cofactor is FMN.

It catalyses the reaction hydrogen sulfide + 3 NADP(+) + 3 H2O = sulfite + 3 NADPH + 4 H(+). Its pathway is sulfur metabolism; hydrogen sulfide biosynthesis; hydrogen sulfide from sulfite (NADPH route): step 1/1. Component of the sulfite reductase complex that catalyzes the 6-electron reduction of sulfite to sulfide. This is one of several activities required for the biosynthesis of L-cysteine from sulfate. The flavoprotein component catalyzes the electron flow from NADPH -&gt; FAD -&gt; FMN to the hemoprotein component. This chain is Sulfite reductase [NADPH] flavoprotein alpha-component, found in Serratia proteamaculans (strain 568).